An 88-amino-acid chain; its full sequence is Cold-regulated protein BLT14 (88 aa).

This is Cold-regulated protein BLT14 (BLT14) from Hordeum vulgare (Barley).